Reading from the N-terminus, the 147-residue chain is Deoxyuridine 5'-triphosphate nucleotidohydrolase (147 aa).

Substrate contacts are provided by residues 63 to 65, Asn-76, and 80 to 82; these read RSG and TID.

It belongs to the dUTPase family. The cofactor is Mg(2+).

It catalyses the reaction dUTP + H2O = dUMP + diphosphate + H(+). Its pathway is pyrimidine metabolism; dUMP biosynthesis; dUMP from dCTP (dUTP route): step 2/2. Functionally, this enzyme is involved in nucleotide metabolism: it produces dUMP, the immediate precursor of thymidine nucleotides and it decreases the intracellular concentration of dUTP so that uracil cannot be incorporated into DNA. The sequence is that of Deoxyuridine 5'-triphosphate nucleotidohydrolase from Chlamydia felis (strain Fe/C-56) (Chlamydophila felis).